We begin with the raw amino-acid sequence, 118 residues long: Ribosomal silencing factor RsfS (118 aa).

The protein belongs to the Iojap/RsfS family. As to quaternary structure, interacts with ribosomal protein uL14 (rplN).

It localises to the cytoplasm. Functions as a ribosomal silencing factor. Interacts with ribosomal protein uL14 (rplN), blocking formation of intersubunit bridge B8. Prevents association of the 30S and 50S ribosomal subunits and the formation of functional ribosomes, thus repressing translation. This chain is Ribosomal silencing factor RsfS, found in Bacillus subtilis (strain 168).